Reading from the N-terminus, the 382-residue chain is Elongation factor Tu (382 aa).

GTP-binding positions include 1–7, 62–66, and 117–120; these read HVDHGKT, DCPGH, and NKVD. In terms of domain architecture, tr-type G spans 1-190; it reads HVDHGKTTLT…AVDEYIPTPQ (190 aa). Thr-7 is a binding site for Mg(2+).

It belongs to the TRAFAC class translation factor GTPase superfamily. Classic translation factor GTPase family. EF-Tu/EF-1A subfamily. In terms of assembly, monomer.

Its subcellular location is the cytoplasm. The catalysed reaction is GTP + H2O = GDP + phosphate + H(+). In terms of biological role, GTP hydrolase that promotes the GTP-dependent binding of aminoacyl-tRNA to the A-site of ribosomes during protein biosynthesis. This Chloroflexus aurantiacus protein is Elongation factor Tu.